The primary structure comprises 274 residues: 3-methyl-2-oxobutanoate hydroxymethyltransferase (274 aa).

Positions 49 and 88 each coordinate Mg(2+). Residues 49 to 50 (DS), Asp88, and Lys118 each bind 3-methyl-2-oxobutanoate. Residue Glu120 coordinates Mg(2+). The active-site Proton acceptor is the Glu187.

It belongs to the PanB family. As to quaternary structure, homodecamer; pentamer of dimers. It depends on Mg(2+) as a cofactor.

The protein resides in the cytoplasm. The enzyme catalyses 3-methyl-2-oxobutanoate + (6R)-5,10-methylene-5,6,7,8-tetrahydrofolate + H2O = 2-dehydropantoate + (6S)-5,6,7,8-tetrahydrofolate. It participates in cofactor biosynthesis; (R)-pantothenate biosynthesis; (R)-pantoate from 3-methyl-2-oxobutanoate: step 1/2. Functionally, catalyzes the reversible reaction in which hydroxymethyl group from 5,10-methylenetetrahydrofolate is transferred onto alpha-ketoisovalerate to form ketopantoate. The chain is 3-methyl-2-oxobutanoate hydroxymethyltransferase from Rhodopseudomonas palustris (strain BisB5).